Here is a 553-residue protein sequence, read N- to C-terminus: Glycine betaine/proline/choline transporter VP1723 (553 aa).

12 helical membrane-spanning segments follow: residues 43-63 (NRVF…TLTF), 85-105 (FFLA…VTPL), 122-142 (AGWL…FFGV), 191-211 (WALH…IFSF), 231-251 (VWGW…VFGL), 278-298 (TQVV…VAGL), 310-330 (MILA…MAIL), 362-382 (WTAF…MFIA), 393-413 (FIIC…TAFG), 443-463 (VMPF…VFFI), 490-510 (VFWC…GGLA), and 515-535 (MAVT…VSLI).

Belongs to the BCCT transporter (TC 2.A.15) family.

Its subcellular location is the cell inner membrane. Involved in the uptake of osmoprotectants. Can transport glycine betaine, proline and choline. The protein is Glycine betaine/proline/choline transporter VP1723 of Vibrio parahaemolyticus serotype O3:K6 (strain RIMD 2210633).